A 225-amino-acid polypeptide reads, in one-letter code: Insulin-induced gene 2 protein (225 aa).

Residues 1–28 (MAEGETESPGPKKCGPYISSVTSQSVNL) are Cytoplasmic-facing. The helical transmembrane segment at 29 to 51 (MIRGVVLFFIGVFLALVLNLLQI) threads the bilayer. Residues 52-70 (QRNVTLFPPDVIASIFSSA) are Lumenal-facing. The chain crosses the membrane as a helical span at residues 71 to 88 (WWVPPCCGTASAVIGLLY). Over 89-103 (PCIDRHLGEPHKFKR) the chain is Cytoplasmic. The helical transmembrane segment at 104–126 (EWSSVMRCVAVFVGINHASAKVD) threads the bilayer. Residues 127 to 129 (FDN) lie on the Lumenal side of the membrane. The chain crosses the membrane as a helical span at residues 130–148 (NIQLSLTLAALSIGLWWTF). Residues 149–153 (DRSRS) are Cytoplasmic-facing. S151 is subject to Phosphoserine; by PCK1. The helical transmembrane segment at 154–175 (GFGLGVGIAFLATVVTQLLVYN) threads the bilayer. Topologically, residues 176 to 189 (GVYQYTSPDFLYVR) are lumenal. Residues 190-207 (SWLPCIFFAGGITMGNIG) form a helical membrane-spanning segment. Residues 208–225 (RQLAMYECKVIAEKSHQE) are Cytoplasmic-facing. C215 bears the Cysteine sulfenic acid (-SOH); alternate mark. A Glycyl cysteine thioester (Cys-Gly) (interchain with G-Cter in ubiquitin); alternate cross-link involves residue C215. The KxHxx signature appears at 219 to 225 (AEKSHQE).

Belongs to the INSIG family. In terms of assembly, interacts with SCAP; interaction is direct and only takes place in the presence of sterols; it prevents interaction between SCAP and the coat protein complex II (COPII). Associates with the SCAP-SREBP complex (composed of SCAP and SREBF1/SREBP1 or SREBF2/SREBP2); association is mediated via its interaction with SCAP and only takes place in the presence of sterols. Interacts with RNF139. Interacts with RNF145. Post-translationally, phosphorylation at Ser-151 by PCK1 reduces binding to oxysterol, disrupting the interaction between INSIG2 and SCAP, thereby promoting nuclear translocation of SREBP proteins (SREBF1/SREBP1 or SREBF2/SREBP2) and subsequent transcription of downstream lipogenesis-related genes. In terms of processing, polyubiquitinated by AMFR/gp78 at Cys-215 in some tissues such as adipose tissues, undifferentiated myoblasts and liver, leading to its degradation. In differentiated myotubes, Cys-215 oxidation prevents ubiquitination at the same site, resulting in protein stabilization. Oxidized at Cys-215 in differentiated myotubes, preventing ubiquitination at the same site, and resulting in protein stabilization.

Its subcellular location is the endoplasmic reticulum membrane. In terms of biological role, oxysterol-binding protein that mediates feedback control of cholesterol synthesis by controlling both endoplasmic reticulum to Golgi transport of SCAP and degradation of HMGCR. Acts as a negative regulator of cholesterol biosynthesis by mediating the retention of the SCAP-SREBP complex in the endoplasmic reticulum, thereby blocking the processing of sterol regulatory element-binding proteins (SREBPs) SREBF1/SREBP1 and SREBF2/SREBP2. Binds oxysterol, including 22-hydroxycholesterol, 24-hydroxycholesterol, 25-hydroxycholesterol and 27-hydroxycholesterol, regulating interaction with SCAP and retention of the SCAP-SREBP complex in the endoplasmic reticulum. In presence of oxysterol, interacts with SCAP, retaining the SCAP-SREBP complex in the endoplasmic reticulum, thereby preventing SCAP from escorting SREBF1/SREBP1 and SREBF2/SREBP2 to the Golgi. Sterol deprivation or phosphorylation by PCK1 reduce oxysterol-binding, disrupting the interaction between INSIG2 and SCAP, thereby promoting Golgi transport of the SCAP-SREBP complex, followed by processing and nuclear translocation of SREBF1/SREBP1 and SREBF2/SREBP2. Also regulates cholesterol synthesis by regulating degradation of HMGCR: initiates the sterol-mediated ubiquitin-mediated endoplasmic reticulum-associated degradation (ERAD) of HMGCR via recruitment of the reductase to the ubiquitin ligase RNF139. The polypeptide is Insulin-induced gene 2 protein (Homo sapiens (Human)).